The sequence spans 249 residues: MMAQSKANGSHYALTAIGLGMLVLGVIMAMWNLVPGFSPADKPTSQGNKTEGGGGILKSKTFSVAYVLVGAGMMLLLLAICLSIRDKRRMRQSEELARIQQQAGTVPHSQEEDSQEEEEDVSSRYYVPSYEEVMNTGYPETRGQEQNPRLSISLPSYESLTGLDEATPTSTRAETETSPGHAPDRQNSKLAKRLKPLKVRRIKSEKLHLKDFRITLPDKNVPPPSIEPLTPPPLYDEVQAKAPDARPPD.

Transmembrane regions (helical) follow at residues 17 to 37 (IGLG…VPGF) and 64 to 84 (VAYV…CLSI). Disordered stretches follow at residues 95-126 (ELAR…SRYY), 161-199 (TGLD…PLKV), and 213-249 (RITL…RPPD). The span at 99-108 (IQQQAGTVPH) shows a compositional bias: polar residues. S109, S114, S178, and S188 each carry phosphoserine. The span at 167 to 178 (TPTSTRAETETS) shows a compositional bias: polar residues. Positions 190–199 (LAKRLKPLKV) are enriched in basic residues. Positions 220-234 (NVPPPSIEPLTPPPL) are enriched in pro residues.

The protein localises to the membrane. In Mus musculus (Mouse), this protein is Transmembrane protein 51 (Tmem51).